A 357-amino-acid chain; its full sequence is DNA replication and repair protein RecF (357 aa).

30-37 (GANGSGKT) provides a ligand contact to ATP.

Belongs to the RecF family.

Its subcellular location is the cytoplasm. Functionally, the RecF protein is involved in DNA metabolism; it is required for DNA replication and normal SOS inducibility. RecF binds preferentially to single-stranded, linear DNA. It also seems to bind ATP. This is DNA replication and repair protein RecF from Escherichia coli O6:K15:H31 (strain 536 / UPEC).